We begin with the raw amino-acid sequence, 362 residues long: Aminomethyltransferase (362 aa).

The protein belongs to the GcvT family. As to quaternary structure, the glycine cleavage system is composed of four proteins: P, T, L and H.

It carries out the reaction N(6)-[(R)-S(8)-aminomethyldihydrolipoyl]-L-lysyl-[protein] + (6S)-5,6,7,8-tetrahydrofolate = N(6)-[(R)-dihydrolipoyl]-L-lysyl-[protein] + (6R)-5,10-methylene-5,6,7,8-tetrahydrofolate + NH4(+). Its function is as follows. The glycine cleavage system catalyzes the degradation of glycine. The polypeptide is Aminomethyltransferase (Listeria monocytogenes serotype 4b (strain CLIP80459)).